The chain runs to 142 residues: Protein NIM1-INTERACTING 1 (142 aa).

Residues 47 to 53 are involved in NPR1/NIM1 interaction; it reads DTFFKLI. The Nuclear localization signal motif lies at 60–64; that stretch reads RKRRR. 2 disordered regions span residues 63 to 86 and 108 to 142; these read RREELAENSGVVRRKSNGGERSGI and MFVSDHKEENTKVEQEEDQTEERNEDKALDLNLAL. The stretch at 110 to 141 forms a coiled coil; sequence VSDHKEENTKVEQEEDQTEERNEDKALDLNLA. Over residues 111 to 121 the composition is skewed to basic and acidic residues; sequence SDHKEENTKVE.

It belongs to the NPR1-interactor family. As to quaternary structure, interacts with NPR1 C-terminal region.

The protein resides in the nucleus. The protein is Protein NIM1-INTERACTING 1 of Arabidopsis thaliana (Mouse-ear cress).